The following is a 104-amino-acid chain: Enhancer of rudimentary homolog (104 aa).

Residue Ser2 is modified to N-acetylserine. Thr11 is subject to Phosphothreonine. Lys12 participates in a covalent cross-link: Glycyl lysine isopeptide (Lys-Gly) (interchain with G-Cter in SUMO2).

The protein belongs to the E(R) family. In terms of assembly, homodimer.

It is found in the nucleus. May have a role in the cell cycle. This Bos taurus (Bovine) protein is Enhancer of rudimentary homolog (ERH).